A 988-amino-acid polypeptide reads, in one-letter code: Squamosa promoter-binding-like protein 16 (988 aa).

The disordered stretch occupies residues glycine 52–tyrosine 79. Over residues proline 69–asparagine 78 the composition is skewed to gly residues. An SBP-type zinc finger spans residues tyrosine 79 to threonine 156. Cysteine 82, cysteine 87, cysteine 104, histidine 107, cysteine 123, cysteine 126, histidine 130, and cysteine 142 together coordinate Zn(2+). The Bipartite nuclear localization signal motif lies at lysine 139–lysine 155. 2 disordered regions span residues arginine 240 to serine 262 and glycine 289 to threonine 416. Polar residues-rich tracts occupy residues asparagine 250 to serine 262, leucine 301 to serine 311, and arginine 327 to serine 358. The segment covering alanine 368–serine 379 has biased composition (low complexity).

Zn(2+) is required as a cofactor.

It is found in the nucleus. Trans-acting factor that binds specifically to the consensus nucleotide sequence 5'-TNCGTACAA-3'. The polypeptide is Squamosa promoter-binding-like protein 16 (SPL16) (Arabidopsis thaliana (Mouse-ear cress)).